Here is an 89-residue protein sequence, read N- to C-terminus: Acyl-CoA-binding protein (89 aa).

Residues 3 to 88 (LKEEFEEHAE…VKQLFEAAGS (86 aa)) enclose the ACB domain. Residues 30-34 (YGLYK), Lys56, and Tyr75 contribute to the an acyl-CoA site.

Belongs to the ACBP family.

Its function is as follows. Binds medium- and long-chain acyl-CoA esters with very high affinity and may function as an intracellular carrier of acyl-CoA esters. This Gossypium hirsutum (Upland cotton) protein is Acyl-CoA-binding protein.